Reading from the N-terminus, the 509-residue chain is Autophagy-related protein 16 (509 aa).

WD repeat units follow at residues 223-262 (AHEGGCGSIVFEYNSGTLFTGGQDRAVKMWDTNSGTLIKS), 265-304 (GSLGNILDMAVTHDNKSVIAATSSNNLFVWDVSSGRVRHT), 307-347 (GHTD…CTNT), 349-388 (LFTSNCNAICLSIDGLTVFSGHMDGNLRLWDIQTGKLLSE), 391-430 (GHSSAVTSVSLSRNGNRILTSGRDNVHNVFDTRTLEICGT), 437-478 (RLAS…SILK), and 480-509 (QTSPILCCSWSGIGKPLASADKNGYVCTWT).

The protein belongs to the WD repeat ATG16 family.

May play a role in autophagy. The protein is Autophagy-related protein 16 of Arabidopsis thaliana (Mouse-ear cress).